The following is a 268-amino-acid chain: Ubiquinone biosynthesis protein COQ4 homolog, mitochondrial (268 aa).

4 residues coordinate Zn(2+): His171, Asp172, His175, and Glu187.

It belongs to the COQ4 family. As to quaternary structure, component of a multi-subunit COQ enzyme complex. Requires Zn(2+) as cofactor.

It is found in the mitochondrion inner membrane. The catalysed reaction is a 4-hydroxy-3-methoxy-5-(all-trans-polyprenyl)benzoate + H(+) = a 2-methoxy-6-(all-trans-polyprenyl)phenol + CO2. It functions in the pathway cofactor biosynthesis; ubiquinone biosynthesis. Lyase that catalyzes the C1-decarboxylation of 4-hydroxy-3-methoxy-5-(all-trans-polyprenyl)benzoic acid into 2-methoxy-6-(all-trans-polyprenyl)phenol during ubiquinone biosynthesis. The sequence is that of Ubiquinone biosynthesis protein COQ4 homolog, mitochondrial from Drosophila sechellia (Fruit fly).